The sequence spans 103 residues: N(4)-acetylcytidine amidohydrolase (103 aa).

The ASCH domain maps to 6 to 94; the sequence is ITFFQRFQDD…IAGIYPDQTQ (89 aa). Lys21 serves as the catalytic Proton acceptor. The Nucleophile role is filled by Thr24. Glu74 serves as the catalytic Proton donor.

This sequence belongs to the N(4)-acetylcytidine amidohydrolase family.

The enzyme catalyses N(4)-acetylcytidine + H2O = cytidine + acetate + H(+). The catalysed reaction is N(4)-acetyl-2'-deoxycytidine + H2O = 2'-deoxycytidine + acetate + H(+). It catalyses the reaction N(4)-acetylcytosine + H2O = cytosine + acetate + H(+). In terms of biological role, catalyzes the hydrolysis of N(4)-acetylcytidine (ac4C). This chain is N(4)-acetylcytidine amidohydrolase, found in Citrobacter koseri (strain ATCC BAA-895 / CDC 4225-83 / SGSC4696).